We begin with the raw amino-acid sequence, 3001 residues long: BEACH domain-containing protein C2 (3001 aa).

Disordered stretches follow at residues 43–80 (DFEQ…SSFG), 103–156 (DVQS…KATV), 1018–1076 (NVLA…NVGS), 1846–1868 (TFSS…PRDK), 2039–2071 (YSGT…SNPP), 2101–2132 (AEEH…RTSN), and 2193–2212 (NLAD…DRSW). At Ser-48 the chain carries Phosphoserine. 3 stretches are compositionally biased toward polar residues: residues 57-72 (NESQ…FSNS), 121-132 (SMQQSLSETSLD), and 1037-1050 (SPYN…QLDS). The segment covering 1854 to 1863 (LEPPNNNAPP) has biased composition (pro residues). The span at 2101–2119 (AEEHKRDEGRISGSHEHAS) shows a compositional bias: basic and acidic residues. Residues 2120-2129 (RTSAGNSDPR) show a composition bias toward polar residues. Residues 2151 to 2260 (ELDERILLEL…GRRNAYRAIV (110 aa)) form the BEACH-type PH domain. Residues 2196 to 2211 (DHSDESQSGDQEKDRS) are compositionally biased toward basic and acidic residues. Residues 2275–2564 (QRPEQLLRRT…QLLTVPHMKR (290 aa)) enclose the BEACH domain. WD repeat units follow at residues 2679 to 2718 (SGIR…TLET), 2721 to 2760 (GHCA…TSRT), 2802 to 2841 (GHRR…LIRR), 2842 to 2881 (LVGV…IAKA), and 2953 to 2992 (GQGQ…LKVV).

The sequence is that of BEACH domain-containing protein C2 from Arabidopsis thaliana (Mouse-ear cress).